The primary structure comprises 1240 residues: DNA-directed RNA polymerase subunit beta (1240 aa).

It belongs to the RNA polymerase beta chain family. In terms of assembly, the RNAP catalytic core consists of 2 alpha, 1 beta, 1 beta' and 1 omega subunit. When a sigma factor is associated with the core the holoenzyme is formed, which can initiate transcription.

It catalyses the reaction RNA(n) + a ribonucleoside 5'-triphosphate = RNA(n+1) + diphosphate. Its function is as follows. DNA-dependent RNA polymerase catalyzes the transcription of DNA into RNA using the four ribonucleoside triphosphates as substrates. This Phytoplasma australiense protein is DNA-directed RNA polymerase subunit beta.